The sequence spans 74 residues: Antimicrobial peptide ToAp1 (74 aa).

An N-terminal signal peptide occupies residues 1–22 (MQMKYLIPIFFLVLIVADHCHA). Lysine 39 carries the lysine amide modification. A propeptide spanning residues 40-74 (GRRKRDITAQIEQYRNIQKREAAELEELLANLPVY) is cleaved from the precursor.

This sequence belongs to the non-disulfide-bridged peptide (NDBP) superfamily. Short antimicrobial peptide (group 4) family. In terms of tissue distribution, expressed by the venom gland.

Its subcellular location is the secreted. Functionally, antimicrobial peptide. Is able to kill Mycobacterium abscessus subsp. massiliense in a dose-dependent manner. Has antifungal activity against Candida spp. and one Cryptococcus neoformans strains with MICs values ranging from 12.5 to 200 uM. Also shows an inhibitory activity on C.albicans biofilms at high concentrations. Shows low cytotoxic activity and has weak hemolytic activity on human erythrocytes. Shows anti-inflammatory activities, since it decreases release of pro-inflammatory cytokines, and increases release of anti-inflammatory cytokines. Acts by blocking the Toll-like receptor 4 (TLR4). In addition, decreases the expression of costimulatory molecules such as CD80 and CD86 in LPS-stimulated cells. In vivo, does not induce immune cell migration. Helical wheel projections predict an amphipathic peptide with distinct hydrophobic and hydrophilic faces. The polypeptide is Antimicrobial peptide ToAp1 (Tityus obscurus (Amazonian scorpion)).